A 598-amino-acid chain; its full sequence is Aspartate--tRNA(Asp/Asn) ligase (598 aa).

Position 172 (Glu172) interacts with L-aspartate. The interval 196-199 is aspartate; sequence QLFK. Arg218 is an L-aspartate binding site. Residues 218-220 and Gln227 each bind ATP; that span reads RDE. Residue His455 participates in L-aspartate binding. Residue Glu489 coordinates ATP. Arg496 provides a ligand contact to L-aspartate. An ATP-binding site is contributed by 541-544; the sequence is GLDR.

The protein belongs to the class-II aminoacyl-tRNA synthetase family. Type 1 subfamily. In terms of assembly, homodimer.

The protein localises to the cytoplasm. The enzyme catalyses tRNA(Asx) + L-aspartate + ATP = L-aspartyl-tRNA(Asx) + AMP + diphosphate. In terms of biological role, aspartyl-tRNA synthetase with relaxed tRNA specificity since it is able to aspartylate not only its cognate tRNA(Asp) but also tRNA(Asn). Reaction proceeds in two steps: L-aspartate is first activated by ATP to form Asp-AMP and then transferred to the acceptor end of tRNA(Asp/Asn). The polypeptide is Aspartate--tRNA(Asp/Asn) ligase (Burkholderia mallei (strain ATCC 23344)).